The following is an 864-amino-acid chain: Arf-GAP with GTPase, ANK repeat and PH domain-containing protein 1 (864 aa).

The tract at residues 66 to 276 (SRSVPELKVG…QTSNGGGSLS (211 aa)) is small GTPase-like. Residues 67 to 241 (RSVPELKVGI…TRKKQQLSIG (175 aa)) form the GLD domain. Residues 78–85 (GNLASGKS), 122–126 (IRDEG), and 178–181 (TQDA) contribute to the GTP site. Disordered regions lie at residues 266–343 (SQTS…IGSG), 405–455 (VPGK…QMAS), and 499–549 (TGLG…LSST). The segment covering 275–289 (LSDYSSSVPSTPSTS) has biased composition (low complexity). Basic and acidic residues predominate over residues 322-337 (KGSDPDKDKKGLESRA). The 246-residue stretch at 346 to 591 (IPIKQGMLLK…WVQAIESQIL (246 aa)) folds into the PH domain. Residues 413–428 (ATSSCAPVASPKTNGL) are compositionally biased toward polar residues. Low complexity predominate over residues 507 to 517 (SSPSISSTTSP). A compositionally biased stretch (basic residues) spans 527-537 (ANRKKHRRKKS). Residues 538–549 (TSNFKVDGLSST) are compositionally biased toward polar residues. The region spanning 612 to 732 (ALALQSIRNL…LFLSPLPCRD (121 aa)) is the Arf-GAP domain. A C4-type zinc finger spans residues 627–650 (CVDCDAQSPDWASLNLGALMCIEC). 2 ANK repeats span residues 771–800 (DRRT…DVMA) and 804–833 (HGNT…PDEQ). A compositionally biased stretch (low complexity) spans 845–854 (KNNRNNNSNA). The interval 845-864 (KNNRNNNSNAGGSGLMPTLI) is disordered.

The protein belongs to the centaurin gamma-like family. Homodimer. Interacts with several subunits of the AP-3 protein complex.

The protein localises to the cytoplasm. In terms of biological role, GTPase-activating protein. Directly and specifically regulates the adapter protein 3 (AP-3)-dependent trafficking of proteins in the endosomal-lysosomal system. The sequence is that of Arf-GAP with GTPase, ANK repeat and PH domain-containing protein 1 (agap1) from Xenopus laevis (African clawed frog).